The chain runs to 421 residues: Acetate kinase (421 aa).

Asn7 serves as a coordination point for Mg(2+). Residue Lys14 coordinates ATP. Arg91 contacts substrate. Catalysis depends on Asp148, which acts as the Proton donor/acceptor. ATP contacts are provided by residues His208–Gly212 and Asp283–Arg285. Glu387 contacts Mg(2+).

It belongs to the acetokinase family. Homodimer. Mg(2+) serves as cofactor. The cofactor is Mn(2+).

The protein resides in the cytoplasm. It carries out the reaction acetate + ATP = acetyl phosphate + ADP. The protein operates within metabolic intermediate biosynthesis; acetyl-CoA biosynthesis; acetyl-CoA from acetate: step 1/2. Functionally, catalyzes the formation of acetyl phosphate from acetate and ATP. Can also catalyze the reverse reaction. The sequence is that of Acetate kinase from Trichlorobacter lovleyi (strain ATCC BAA-1151 / DSM 17278 / SZ) (Geobacter lovleyi).